Consider the following 363-residue polypeptide: Biotin synthase (363 aa).

The region spanning 40–268 (NVVQVSTLLS…ETQVRLSAGR (229 aa)) is the Radical SAM core domain. Positions 55, 59, and 62 each coordinate [4Fe-4S] cluster. Cysteine 99, cysteine 131, cysteine 191, and arginine 263 together coordinate [2Fe-2S] cluster.

This sequence belongs to the radical SAM superfamily. Biotin synthase family. As to quaternary structure, homodimer. [4Fe-4S] cluster is required as a cofactor. The cofactor is [2Fe-2S] cluster.

It carries out the reaction (4R,5S)-dethiobiotin + (sulfur carrier)-SH + 2 reduced [2Fe-2S]-[ferredoxin] + 2 S-adenosyl-L-methionine = (sulfur carrier)-H + biotin + 2 5'-deoxyadenosine + 2 L-methionine + 2 oxidized [2Fe-2S]-[ferredoxin]. Its pathway is cofactor biosynthesis; biotin biosynthesis; biotin from 7,8-diaminononanoate: step 2/2. Its function is as follows. Catalyzes the conversion of dethiobiotin (DTB) to biotin by the insertion of a sulfur atom into dethiobiotin via a radical-based mechanism. The protein is Biotin synthase of Flavobacterium johnsoniae (strain ATCC 17061 / DSM 2064 / JCM 8514 / BCRC 14874 / CCUG 350202 / NBRC 14942 / NCIMB 11054 / UW101) (Cytophaga johnsonae).